Consider the following 328-residue polypeptide: Olfactory receptor 2AJ1 (328 aa).

The Extracellular portion of the chain corresponds to 1–25; it reads MGHQNHTFSSDFILLGLFSSSPTSV. An N-linked (GlcNAc...) asparagine glycan is attached at Asn-5. A helical membrane pass occupies residues 26 to 49; that stretch reads VFFLVLFVIFIMSVTENTLMILLI. Residues 50-57 are Cytoplasmic-facing; that stretch reads RSDSRLHT. The helical transmembrane segment at 58 to 79 threads the bilayer; it reads PMYFLLSHLSLMDILHVSNIVP. Over 80 to 100 the chain is Extracellular; the sequence is KMVTNFLSGSRTISFAGCGFQ. Cysteines 97 and 189 form a disulfide. A helical transmembrane segment spans residues 101–120; sequence VFLSLTLLGGECLLLAAMSC. Topologically, residues 121–139 are cytoplasmic; that stretch reads DRYVAICHPLRYPILMKEY. Residues 140–158 traverse the membrane as a helical segment; the sequence is ASALMAGGSWLIGVFNSTV. The Extracellular segment spans residues 159–195; the sequence is HTAYALQFPFCGSRAIDHFFCEVPAMLKLSCADTTRY. Residues 196 to 219 form a helical membrane-spanning segment; it reads ERGVCVSAVIFLLIPFSLISASYG. The Cytoplasmic portion of the chain corresponds to 220–236; the sequence is QIILTVLQMKSSEARKK. Residues 237–259 traverse the membrane as a helical segment; sequence SFSTCSFHMIVVTMYYGPFIFTY. At 260–272 the chain is on the extracellular side; the sequence is MRPKSYHTPGQDK. A helical transmembrane segment spans residues 273 to 292; sequence FLAIFYTILTPTLNPFIYSF. At 293 to 328 the chain is on the cytoplasmic side; it reads RNKDVLAVMKNMLKSNFLHKKMNRKIPECVFCLFLC.

This sequence belongs to the G-protein coupled receptor 1 family.

The protein localises to the cell membrane. Its function is as follows. Odorant receptor. This chain is Olfactory receptor 2AJ1 (OR2AJ1), found in Homo sapiens (Human).